The chain runs to 133 residues: Ribosome-binding factor A (133 aa).

It belongs to the RbfA family. As to quaternary structure, monomer. Binds 30S ribosomal subunits, but not 50S ribosomal subunits or 70S ribosomes.

It localises to the cytoplasm. Functionally, one of several proteins that assist in the late maturation steps of the functional core of the 30S ribosomal subunit. Associates with free 30S ribosomal subunits (but not with 30S subunits that are part of 70S ribosomes or polysomes). Required for efficient processing of 16S rRNA. May interact with the 5'-terminal helix region of 16S rRNA. The chain is Ribosome-binding factor A from Chelativorans sp. (strain BNC1).